A 247-amino-acid chain; its full sequence is tRNA (guanine-N(1)-)-methyltransferase (247 aa).

S-adenosyl-L-methionine-binding positions include Gly-117 and 136–141 (LGDFVL).

Belongs to the RNA methyltransferase TrmD family. Homodimer.

It is found in the cytoplasm. It carries out the reaction guanosine(37) in tRNA + S-adenosyl-L-methionine = N(1)-methylguanosine(37) in tRNA + S-adenosyl-L-homocysteine + H(+). Functionally, specifically methylates guanosine-37 in various tRNAs. The protein is tRNA (guanine-N(1)-)-methyltransferase of Myxococcus xanthus (strain DK1622).